The primary structure comprises 253 residues: Phycoerythrobilin:ferredoxin oxidoreductase (253 aa).

Belongs to the HY2 family.

The catalysed reaction is (3Z)-phycoerythrobilin + oxidized 2[4Fe-4S]-[ferredoxin] = 15,16-dihydrobiliverdin + reduced 2[4Fe-4S]-[ferredoxin] + 2 H(+). In terms of biological role, catalyzes the two-electron reduction of the C2 and C3(1) diene system of 15,16-dihydrobiliverdin. This is Phycoerythrobilin:ferredoxin oxidoreductase from Prochlorococcus marinus (strain AS9601).